Consider the following 238-residue polypeptide: Ribosomal RNA small subunit methyltransferase G (238 aa).

Residues glycine 77, phenylalanine 82, 128–129 (AE), and arginine 147 each bind S-adenosyl-L-methionine.

It belongs to the methyltransferase superfamily. RNA methyltransferase RsmG family.

It localises to the cytoplasm. Specifically methylates the N7 position of guanine in position 535 of 16S rRNA. The sequence is that of Ribosomal RNA small subunit methyltransferase G from Listeria monocytogenes serotype 4b (strain CLIP80459).